Here is a 292-residue protein sequence, read N- to C-terminus: Tissue factor (292 aa).

An N-terminal signal peptide occupies residues 1-35 (MATPNGPRVPCPQAAVARALLFGLVLIQGAGVAGT). Topologically, residues 36-248 (TDVVVAYNIT…TSHEKVLSTE (213 aa)) are extracellular. Asparagine 43 carries N-linked (GlcNAc...) asparagine glycosylation. The WKS motif signature appears at 46–48 (WKS). Residues cysteine 81 and cysteine 89 are joined by a disulfide bond. 2 N-linked (GlcNAc...) asparagine glycosylation sites follow: asparagine 153 and asparagine 181. Cysteine 215 and cysteine 238 are oxidised to a cystine. Residues 249-271 (LFFIIGTVMLVIIIFIVVLSVSL) traverse the membrane as a helical segment. Topologically, residues 272 to 292 (HKCRKVRAERSGKENTPLNAA) are cytoplasmic. The S-palmitoyl cysteine moiety is linked to residue cysteine 274.

Belongs to the tissue factor family. As to quaternary structure, interacts with HSPE; the interaction, inhibited by heparin, promotes the generation of activated factor X and activates coagulation in the presence of activated factor VII.

The protein localises to the membrane. In terms of biological role, initiates blood coagulation by forming a complex with circulating factor VII or VIIa. The [TF:VIIa] complex activates factors IX or X by specific limited proteolysis. TF plays a role in normal hemostasis by initiating the cell-surface assembly and propagation of the coagulation protease cascade. The polypeptide is Tissue factor (F3) (Bos taurus (Bovine)).